The chain runs to 185 residues: Ribonuclease M5 (185 aa).

Positions 4–87 constitute a Toprim domain; that stretch reads KEIIVVEGKD…AFLPKEEALA (84 aa). Residues E10, D56, and D58 each coordinate Mg(2+).

Belongs to the ribonuclease M5 family. The cofactor is Mg(2+).

It localises to the cytoplasm. It carries out the reaction Endonucleolytic cleavage of RNA, removing 21 and 42 nucleotides, respectively, from the 5'- and 3'-termini of a 5S-rRNA precursor.. Functionally, required for correct processing of both the 5' and 3' ends of 5S rRNA precursor. Cleaves both sides of a double-stranded region yielding mature 5S rRNA in one step. The protein is Ribonuclease M5 of Bacillus anthracis.